The following is a 505-amino-acid chain: MFS-type transporter oryN (505 aa).

The disordered stretch occupies residues 1-54 (MAVAELPNIVSTDSSPSPHPGSRLSSEPTDIESQKAPSNAEPKTDPNLVTWDGP). 13 helical membrane-spanning segments follow: residues 69-89 (AFVT…SSIF), 106-126 (VVTL…PVWG), 135-155 (KWPM…VAVA), 166-186 (FLTG…LVDM), 193-213 (GVAM…APLM), 226-246 (FTQW…VFGL), 280-300 (GIKD…VTEP), 301-321 (ILLL…LVFV), 337-357 (ISAL…AIVV), 376-396 (LPLM…FAWT), 401-421 (IHWA…YMVF), 440-460 (IGAN…FGPF), and 468-488 (AWAS…PVLF).

The protein belongs to the major facilitator superfamily. CAR1 family.

It localises to the membrane. MFS-type transporter; part of the gene cluster that mediates the biosynthesis of oryzines, natural products with an unusual maleidride backbone. This chain is MFS-type transporter oryN, found in Aspergillus oryzae (strain ATCC 42149 / RIB 40) (Yellow koji mold).